A 207-amino-acid polypeptide reads, in one-letter code: Dephospho-CoA kinase (207 aa).

The region spanning valine 4–tyrosine 203 is the DPCK domain. Position 12–17 (alanine 12–threonine 17) interacts with ATP.

It belongs to the CoaE family.

It is found in the cytoplasm. It catalyses the reaction 3'-dephospho-CoA + ATP = ADP + CoA + H(+). Its pathway is cofactor biosynthesis; coenzyme A biosynthesis; CoA from (R)-pantothenate: step 5/5. Catalyzes the phosphorylation of the 3'-hydroxyl group of dephosphocoenzyme A to form coenzyme A. In Staphylococcus aureus (strain bovine RF122 / ET3-1), this protein is Dephospho-CoA kinase.